The primary structure comprises 590 residues: ATP-dependent zinc metalloprotease FtsH 1 (590 aa).

The Cytoplasmic portion of the chain corresponds to 1-8 (MLKLTKKQ). Residues 9–29 (LIIVLGIAIVVVSAIGYAVYT) form a helical membrane-spanning segment. Over 30–103 (QYFNEDKLEI…QVRETTDQYS (74 aa)) the chain is Extracellular. The chain crosses the membrane as a helical span at residues 104-124 (VVQVITFVVLIGGFIGVAIFL). Over 125–590 (SKKNATQTSK…NEIFSGFQSM (466 aa)) the chain is Cytoplasmic. 195–202 (GSPGTGKT) serves as a coordination point for ATP. H418 is a binding site for Zn(2+). E419 is a catalytic residue. The Zn(2+) site is built by H422 and D496.

It in the central section; belongs to the AAA ATPase family. This sequence in the C-terminal section; belongs to the peptidase M41 family. In terms of assembly, homohexamer. It depends on Zn(2+) as a cofactor.

The protein resides in the cell membrane. In terms of biological role, acts as a processive, ATP-dependent zinc metallopeptidase for both cytoplasmic and membrane proteins. Plays a role in the quality control of integral membrane proteins. This Alkaliphilus metalliredigens (strain QYMF) protein is ATP-dependent zinc metalloprotease FtsH 1.